The primary structure comprises 78 residues: Probable two-component-system connector protein YcgZ (78 aa).

In terms of biological role, probably a connector protein for RcsB/C regulation of biofilm formation, providing additional signal input into the two-component signaling pathway. Partially antagonizes the activities of YmgA and AriR, proteins that, via the Rcs phosphorelay, promote the synthesis of colanic acid, an exopolysaccharide and matrix component. The protein is Probable two-component-system connector protein YcgZ (ycgZ) of Escherichia coli (strain K12).